Reading from the N-terminus, the 80-residue chain is Cytochrome c oxidase subunit 7A1, mitochondrial (80 aa).

The transit peptide at 1–21 directs the protein to the mitochondrion; sequence MRALRVSQALVRSFSSTARNR. Residues 22 to 46 are Mitochondrial matrix-facing; it reads FENRVAEKQKLFQEDNGLPVHLKGG. The helical transmembrane segment at 47 to 75 threads the bilayer; that stretch reads ATDNILYRVTMTLCLGGTLYSLYCLGWAS. The Mitochondrial intermembrane portion of the chain corresponds to 76–80; that stretch reads FPHKK.

This sequence belongs to the cytochrome c oxidase VIIa family. Component of the complex IV (CIV, cytochrome c oxidase), a multisubunit enzyme composed of 14 subunits. The complex is composed of a catalytic core of 3 subunits MT-CO1, MT-CO2 and MT-CO3, encoded in the mitochondrial DNA, and 11 supernumerary subunits COX4I1 (or COX4I2), COX5A, COX5B, COX6A2 (or COX6A1), COX6B1 (or COX6B2), COX6C, COX7A1 (or COX7A2), COX7B, COX7C, COX8B and NDUFA4, which are encoded in the nuclear genome. The complex exists as a monomer or a dimer and forms supercomplexes (SCs) in the inner mitochondrial membrane with NADH-ubiquinone oxidoreductase (complex I, CI) and ubiquinol-cytochrome c oxidoreductase (cytochrome b-c1 complex, complex III, CIII), resulting in different assemblies (supercomplex SCI(1)III(2)IV(1) and megacomplex MCI(2)III(2)IV(2)).

The protein localises to the mitochondrion inner membrane. The protein operates within energy metabolism; oxidative phosphorylation. Component of the mitochondrial respiratory complex IV (CIV, also named cytochrome c oxidase complex), the last enzyme in the mitochondrial electron transport chain which drives oxidative phosphorylation. The CIV complex is the component of the respiratory chain that catalyzes the reduction of oxygen to water. Acts as an assembly factor that specifically drives the homodimerization of CIV complexes, mediating the formation of mitochondrial respiratory supercomplexes (respirasomes) containing two CIV: supercomplxes with two molecules of CIV show improved activity. Despite being highly expressed in brown adipose tissue, not required for thermogenesis. This chain is Cytochrome c oxidase subunit 7A1, mitochondrial (COX7A1), found in Bos taurus (Bovine).